We begin with the raw amino-acid sequence, 688 residues long: MIOREX complex component 1 (688 aa).

The disordered stretch occupies residues 1 to 24 (MGLKITKGQLRTKDLNQSSSKSSQ). The transit peptide at 1–46 (MGLKITKGQLRTKDLNQSSSKSSQSSRIGVDTCIFTRMLPRINTAI) directs the protein to the mitochondrion.

Associates with the mitochondrial ribosome.

The protein resides in the mitochondrion. Its function is as follows. Component of MIOREX complexes, large expressome-like assemblies of ribosomes with factors involved in all the steps of post-transcriptional gene expression. The sequence is that of MIOREX complex component 1 from Saccharomyces cerevisiae (strain ATCC 204508 / S288c) (Baker's yeast).